We begin with the raw amino-acid sequence, 243 residues long: Terpene cyclase ptmB (243 aa).

3 helical membrane-spanning segments follow: residues 19 to 39, 48 to 68, and 78 to 98; these read IANL…VGMI, YGMA…YSLI, and GVFI…IKFA. Residue asparagine 111 is glycosylated (N-linked (GlcNAc...) asparagine). 4 helical membrane passes run 112–132, 137–157, 172–194, and 205–225; these read LSLI…ALAA, SLAY…GGLC, LWLS…WMYW, and LVLW…ICYW.

This sequence belongs to the paxB family.

It localises to the membrane. It functions in the pathway secondary metabolite biosynthesis. Terpene cyclase; part of the gene cluster that mediates the biosynthesis of the indole diterpenes penitrems. The geranylgeranyl diphosphate (GGPP) synthase ptmG catalyzes the first step in penitrem biosynthesis via conversion of farnesyl pyrophosphate and isopentyl pyrophosphate into geranylgeranyl pyrophosphate (GGPP). Condensation of indole-3-glycerol phosphate with GGPP by the prenyl transferase ptmC then forms 3-geranylgeranylindole (3-GGI). Epoxidation by the FAD-dependent monooxygenase ptmM leads to a epoxidized-GGI that is substrate of the terpene cyclase ptmB for cyclization to yield paspaline. Paspaline is subsequently converted to 13-desoxypaxilline by the cytochrome P450 monooxygenase ptmP, the latter being then converted to paxilline by the cytochrome P450 monooxygenase ptmQ. Paxilline is converted to beta-paxitriol via C-10 ketoreduction by the short-chain dehydrogenase ptmH which can be monoprenylated at the C-20 by the indole diterpene prenyltransferase ptmD. A two-step elimination (acetylation and elimination) process performed by the O-acetyltransferase ptmV and ptmI leads to the production of the prenylated form of penijanthine. The FAD-linked oxidoreductase ptmO then converts the prenylated form of penijanthine into PC-M5 which is in turn transformed into PC-M4 by the aromatic dimethylallyltransferase ptmE. Five sequential oxidative transformations performed by the cytochrome P450 monooxygenases ptmK, ptmU, ptmL, ptmN and ptmJ yield the various penitrem compounds. PtmK, ptmU and ptmM are involved in the formation of the key bicyclic ring of penitrem C via the formation of the intermediates secopenitrem D and penitrem D. PtmL catalyzes the epoxidation of penitrem D and C to yield penitrem B and F, respectively. PtmJ catalyzes the last benzylic hydroxylation to convert penitrem B to prenitrem E and penitrem F to penitrem A. In Penicillium ochrochloron, this protein is Terpene cyclase ptmB.